The primary structure comprises 435 residues: Actin-like protein 7A (435 aa).

Positions 1 to 64 are disordered; the sequence is MWAPPAAIMG…TESKAAKERP (64 aa). Over residues 20–31 the composition is skewed to low complexity; sequence QAPLQTQALQTA. The tract at residues 31–51 is required for interaction with TES; sequence ASLRDGPAKRAVWVRHTSSEP. Positions 55 to 64 are enriched in basic and acidic residues; that stretch reads TESKAAKERP.

Belongs to the actin family. Interacts (via N-terminus) with TES (via LIM domain 2). Heterodimer with TES; the heterodimer interacts with ENAH to form a heterotrimer. Interacts with ACTL9. Interacts with CYLC1; the interaction may be relevant for proper acrosome attachment to the nuclear envelope. Strongly expressed in testis. Also expressed in other tissues.

The protein resides in the cytoplasm. Its subcellular location is the cytoskeleton. It localises to the golgi apparatus. The protein localises to the nucleus. It is found in the cytoplasmic vesicle. The protein resides in the secretory vesicle. Its subcellular location is the acrosome. In terms of biological role, essential for normal spermatogenesis and male fertility. Required for normal sperm head morphology, acroplaxome formation, acrosome attachment, and acrosome granule stability. May anchor and stabilize acrosomal adherence to the acroplaxome at least in part by facilitating the presence of F-actin in the subacrosomal space. May play an important role in formation and fusion of Golgi-derived vesicles during acrosome biogenesis. The protein is Actin-like protein 7A (ACTL7A) of Homo sapiens (Human).